The primary structure comprises 555 residues: Glutamate--tRNA ligase (555 aa).

The 'HIGH' region motif lies at 103–113; sequence PNPSGPLHIGH.

It belongs to the class-I aminoacyl-tRNA synthetase family. Glutamate--tRNA ligase type 2 subfamily.

It localises to the cytoplasm. The catalysed reaction is tRNA(Glu) + L-glutamate + ATP = L-glutamyl-tRNA(Glu) + AMP + diphosphate. Its function is as follows. Catalyzes the attachment of glutamate to tRNA(Glu) in a two-step reaction: glutamate is first activated by ATP to form Glu-AMP and then transferred to the acceptor end of tRNA(Glu). The chain is Glutamate--tRNA ligase from Methanobrevibacter smithii (strain ATCC 35061 / DSM 861 / OCM 144 / PS).